The primary structure comprises 129 residues: UPF0102 protein Cpar_0015 (129 aa).

This sequence belongs to the UPF0102 family.

This is UPF0102 protein Cpar_0015 from Chlorobaculum parvum (strain DSM 263 / NCIMB 8327) (Chlorobium vibrioforme subsp. thiosulfatophilum).